The sequence spans 395 residues: Na(+)/H(+) antiporter NhaA 1 (395 aa).

11 helical membrane-spanning segments follow: residues 11–31 (FFSS…LAMV), 63–83 (MLLW…GLEV), 99–119 (VFPV…YLAF), 129–149 (GWAI…ALLG), 158–178 (IFLM…IALF), 183–203 (LSML…ALNL), 223–243 (VLKS…MIPL), 258–278 (VLHP…NAGV), 282–302 (GVTL…GLFI), 332–352 (IMAV…IATL), and 364–384 (WAKL…YLIL).

Belongs to the NhaA Na(+)/H(+) (TC 2.A.33) antiporter family.

Its subcellular location is the cell inner membrane. The catalysed reaction is Na(+)(in) + 2 H(+)(out) = Na(+)(out) + 2 H(+)(in). Functionally, na(+)/H(+) antiporter that extrudes sodium in exchange for external protons. This Klebsiella pneumoniae subsp. pneumoniae (strain ATCC 700721 / MGH 78578) protein is Na(+)/H(+) antiporter NhaA 1.